The primary structure comprises 179 residues: Transcription factor 21 (179 aa).

A disordered region spans residues 20–87 (CDGLKMDSNK…QVQRNAANAR (68 aa)). The segment covering 33–46 (TSNESTEESSNCEN) has biased composition (low complexity). The segment covering 70 to 80 (SGVSQEGKQVQ) has biased composition (polar residues). Residues 79-131 (VQRNAANARERARMRVLSKAFSRLKTTLPWVPPDTKLSKLDTLRLASSYIAHL) form the bHLH domain.

Efficient DNA binding requires dimerization with another bHLH protein. Forms a heterodimer with TCF3 and binds the E box (5'-CANNTG-3').

Its subcellular location is the nucleus. Functionally, involved in epithelial-mesenchymal interactions in kidney and lung morphogenesis that include epithelial differentiation and branching morphogenesis. May play a role in the specification or differentiation of one or more subsets of epicardial cell types. This is Transcription factor 21 (TCF21) from Homo sapiens (Human).